The following is a 274-amino-acid chain: 4-hydroxy-tetrahydrodipicolinate reductase (274 aa).

NAD(+) is bound by residues 11 to 16 (GGSGRM) and Glu37. Position 38 (Arg38) interacts with NADP(+). NAD(+) contacts are provided by residues 101–103 (GTT) and 125–128 (APNM). His158 functions as the Proton donor/acceptor in the catalytic mechanism. His159 contacts (S)-2,3,4,5-tetrahydrodipicolinate. The active-site Proton donor is Lys162. 168–169 (GT) contributes to the (S)-2,3,4,5-tetrahydrodipicolinate binding site.

The protein belongs to the DapB family.

It is found in the cytoplasm. The catalysed reaction is (S)-2,3,4,5-tetrahydrodipicolinate + NAD(+) + H2O = (2S,4S)-4-hydroxy-2,3,4,5-tetrahydrodipicolinate + NADH + H(+). It catalyses the reaction (S)-2,3,4,5-tetrahydrodipicolinate + NADP(+) + H2O = (2S,4S)-4-hydroxy-2,3,4,5-tetrahydrodipicolinate + NADPH + H(+). The protein operates within amino-acid biosynthesis; L-lysine biosynthesis via DAP pathway; (S)-tetrahydrodipicolinate from L-aspartate: step 4/4. Functionally, catalyzes the conversion of 4-hydroxy-tetrahydrodipicolinate (HTPA) to tetrahydrodipicolinate. This Shewanella pealeana (strain ATCC 700345 / ANG-SQ1) protein is 4-hydroxy-tetrahydrodipicolinate reductase.